Consider the following 226-residue polypeptide: DNA mismatch repair protein MutH (226 aa).

The protein belongs to the MutH family.

It is found in the cytoplasm. Sequence-specific endonuclease that cleaves unmethylated GATC sequences. It is involved in DNA mismatch repair. This is DNA mismatch repair protein MutH from Vibrio parahaemolyticus serotype O3:K6 (strain RIMD 2210633).